Consider the following 365-residue polypeptide: MANKITTFLSGQTGKQISNIDLLNSIRTRASADYQADIPVLEGARINHATVPYQDFQKHANEFFTALVNRIGSTVIKALTYENPLAIFKSETFEFGDTLQEIYVHPAEKKTYDAKSDVSPFKFADTDIEAFYHTLNNENYYERTFERAWIQKAFVSDMAFDEFVDKMFTSLLSSDTLDEYQAVRVYLRNHLRKSLIQTLKGNDKKITVAGTKIDETKQDFVVDFNQSLINLSKRFTIPSRTTFNNPVGVPNMTAIEDQYLVISAEFSTHLDMLLANAFNMDKASVLARTIVVDDFEKFTGEGANNGRKPVAFLISAKSIINKDKLVHMEAIRNPRNMTYNYFYHHHYMTSLSLFENIHFWYVEEA.

Residues 1 to 48 (MANKITTFLSGQTGKQISNIDLLNSIRTRASADYQADIPVLEGARINH) constitute a propeptide that is removed on maturation.

It localises to the virion. Assembles to form an icosahedral capsid. This Streptococcus phage Cp-1 (Bacteriophage Cp-1) protein is Major capsid protein (9).